A 300-amino-acid polypeptide reads, in one-letter code: 17-beta-hydroxysteroid dehydrogenase 13 (300 aa).

Residues 1–19 (MNIILEILLLLITIIYSYL) form the signal peptide. Ser33 is subject to Phosphoserine. Position 40-67 (40-67 (LITGAGHGIGRQTTYEFAKRQSILVLWD)) interacts with NAD(+). Ser172 contributes to the substrate binding site. Catalysis depends on Tyr185, which acts as the Proton acceptor. Lys189 is a binding site for NAD(+).

This sequence belongs to the short-chain dehydrogenases/reductases (SDR) family. Highly expressed in the liver. Also detected in ovary, bone marrow, kidney, brain, lung, skeletal muscle, bladder and testis.

It localises to the lipid droplet. The protein localises to the endoplasmic reticulum. The protein resides in the cytoplasm. It carries out the reaction 17beta-estradiol + NAD(+) = estrone + NADH + H(+). The catalysed reaction is all-trans-retinol + NAD(+) = all-trans-retinal + NADH + H(+). It catalyses the reaction all-trans-retinal + NAD(+) + H2O = all-trans-retinoate + NADH + 2 H(+). Its function is as follows. Plays a pivotal role in hepatic lipid metabolism. In vitro, it catalyzes the oxidation of a variety of lipid substrates, including 17beta-estradiol, retinol, retinal, and leukotriene B4. Functionally, has retinol/retinal dehydrogenase activity in vitro. Does not have retinol/retinal dehydrogenase activity in vitro. This Homo sapiens (Human) protein is 17-beta-hydroxysteroid dehydrogenase 13.